The following is a 1197-amino-acid chain: Neural cell adhesion molecule L1.1 (1197 aa).

5 consecutive Ig-like C2-type domains span residues 1–58, 69–160, 165–263, 268–355, and 360–442; these read EFRQ…TAVS, PSLA…EPMS, PSNS…YTVT, PYWT…THVH, and PAQI…KSIS. Topologically, residues 1-1054 are extracellular; it reads EFRQRDPSPS…SPRNFATEGW (1054 aa). A disulfide bond links cysteine 92 and cysteine 143. Residues asparagine 135, asparagine 149, asparagine 221, asparagine 298, asparagine 414, asparagine 421, asparagine 438, and asparagine 449 are each glycosylated (N-linked (GlcNAc...) asparagine). 3 cysteine pairs are disulfide-bonded: cysteine 199/cysteine 247, cysteine 289/cysteine 339, and cysteine 383/cysteine 432. Residues 451-541 enclose the Ig-like C2-type 6 domain; it reads TKIVGPPQNL…DSDTASGYIT (91 aa). An intrachain disulfide couples cysteine 472 to cysteine 525. 5 consecutive Fibronectin type-III domains span residues 548–643, 645–742, 747–852, 853–952, and 953–1048; these read PPQS…TPAA, PDTN…SGED, APSA…TPEG, APGP…LLDG, and EPPS…SPRN. Over residues 630–640 the composition is skewed to polar residues; it reads APTESSLSYST. Residues 630–655 form a disordered region; sequence APTESSLSYSTPAAKPDTNPENVMTL. An N-linked (GlcNAc...) asparagine glycan is attached at asparagine 708. Residues asparagine 959, asparagine 968, asparagine 1002, and asparagine 1027 are each glycosylated (N-linked (GlcNAc...) asparagine). Residues 1055 to 1075 traverse the membrane as a helical segment; the sequence is FIGLISALVLLLLVLLLLCYI. Topologically, residues 1076–1197 are cytoplasmic; the sequence is KKSKGGKYSV…TSVTGILGPN (122 aa). Disordered regions lie at residues 1115-1135 and 1154-1197; these read MEKCSISQPSGCESKRSSNDS and IGQY…LGPN.

Belongs to the immunoglobulin superfamily. L1/neurofascin/NgCAM family. Expressed in postmitotic neurons in 16-36 hours embryos, including those in the brain, cranial ganglia and otic and olfactory placodes, and in all classes of spinal neurons.

The protein resides in the cell membrane. It is found in the cell projection. Its subcellular location is the growth cone. Cell adhesion molecule with an important role in the development of the nervous system. Involved in neuron-neuron adhesion, neurite fasciculation, outgrowth of neurites, etc. Binds to axonin on neurons. In Danio rerio (Zebrafish), this protein is Neural cell adhesion molecule L1.1 (nadl1.1).